Here is a 64-residue protein sequence, read N- to C-terminus: Purotoxin-2 (64 aa).

The segment at 1-44 (AKACTPLLHDCSHDRHSCCRGDMFKYVCDCFYPEGEDKTEVCSC) is knottin domain. 4 disulfide bridges follow: Cys4–Cys19, Cys11–Cys28, Cys18–Cys44, and Cys30–Cys42. The interval 45 to 64 (QQPKSHKIAEKIIDKAKTTL) is linear cationic cytotoxin domain. Residue Leu64 is modified to Leucine amide.

Belongs to the neurotoxin 19 (CSTX) family. 05 (U4-Lctx) subfamily. Post-translationally, amidation at Leu-64 is not mandatory for activity on P2RX3. In terms of tissue distribution, expressed by the venom gland.

It is found in the secreted. Enhances the high-affinity desensitization of human P2RX3 purinoceptors. At 50 nM, the toxin decreases the IC(50) for ambient ATP from 2.67 nM to 0.77 nM in human P2RX3. The sequence is that of Purotoxin-2 from Alopecosa marikovskyi (Wolf spider).